A 301-amino-acid chain; its full sequence is Ribosomal protein L11 methyltransferase (301 aa).

S-adenosyl-L-methionine-binding residues include T146, G167, D189, and N237.

The protein belongs to the methyltransferase superfamily. PrmA family.

Its subcellular location is the cytoplasm. The enzyme catalyses L-lysyl-[protein] + 3 S-adenosyl-L-methionine = N(6),N(6),N(6)-trimethyl-L-lysyl-[protein] + 3 S-adenosyl-L-homocysteine + 3 H(+). Methylates ribosomal protein L11. The sequence is that of Ribosomal protein L11 methyltransferase from Prochlorococcus marinus (strain MIT 9313).